The chain runs to 70 residues: Myotoxin (70 aa).

The first 22 residues, 1–22 (MKILYLLFAFLFLAFLSEPGNA), serve as a signal peptide directing secretion. Disulfide bonds link Cys26-Cys58, Cys33-Cys52, and Cys40-Cys59.

Belongs to the crotamine-myotoxin family. As to quaternary structure, monomer. As to expression, expressed by the venom gland.

It localises to the secreted. Cationic peptide that possesses multiple functions. It acts as a cell-penetrating peptide (CPP), and as a potent voltage-gated potassium channel (Kv) inhibitor. It exhibits antimicrobial activities, hind limb paralysis, and severe muscle necrosis by a non-enzymatic mechanism. The sequence is that of Myotoxin from Crotalus helleri (Southern pacific rattlesnake).